The chain runs to 189 residues: Transcription factor FapR (189 aa).

It belongs to the FapR family.

Functionally, transcriptional factor involved in regulation of membrane lipid biosynthesis by repressing genes involved in fatty acid and phospholipid metabolism. The protein is Transcription factor FapR of Exiguobacterium sp. (strain ATCC BAA-1283 / AT1b).